A 166-amino-acid polypeptide reads, in one-letter code: Glutamyl-tRNA(Gln) amidotransferase subunit C-2, mitochondrial (166 aa).

It belongs to the GatC family. In terms of assembly, subunit of the heterotrimeric GatCAB amidotransferase (AdT) complex, composed of A, B and C subunits.

Its subcellular location is the mitochondrion. It carries out the reaction L-glutamyl-tRNA(Gln) + L-glutamine + ATP + H2O = L-glutaminyl-tRNA(Gln) + L-glutamate + ADP + phosphate + H(+). Functionally, allows the formation of correctly charged Gln-tRNA(Gln) through the transamidation of misacylated Glu-tRNA(Gln) in the mitochondria. The reaction takes place in the presence of glutamine and ATP through an activated gamma-phospho-Glu-tRNA(Gln). This is Glutamyl-tRNA(Gln) amidotransferase subunit C-2, mitochondrial from Culex quinquefasciatus (Southern house mosquito).